A 394-amino-acid polypeptide reads, in one-letter code: Monoterpene synthase FDS-5, chloroplastic (394 aa).

The N-terminal 65 residues, 1-65 (MASFISLSSK…NLNSQFMQVY (65 aa)), are a transit peptide targeting the chloroplast. Isopentenyl diphosphate-binding residues include lysine 100, arginine 103, and glutamine 138. The Mg(2+) site is built by aspartate 145 and aspartate 149. Positions 145-149 (DDMMD) match the DDXXD motif motif. Dimethylallyl diphosphate is bound at residue arginine 154. Position 155 (arginine 155) interacts with isopentenyl diphosphate. The dimethylallyl diphosphate site is built by lysine 242, glutamine 281, lysine 298, and lysine 307.

It belongs to the FPP/GGPP synthase family. Requires Mg(2+) as cofactor. Mn(2+) is required as a cofactor.

It is found in the plastid. It localises to the chloroplast. The enzyme catalyses isopentenyl diphosphate + dimethylallyl diphosphate = (2E)-geranyl diphosphate + diphosphate. It carries out the reaction 2 dimethylallyl diphosphate = (R,R)-chrysanthemyl diphosphate + diphosphate. It catalyses the reaction 2 dimethylallyl diphosphate = (R)-lavandulyl diphosphate + diphosphate. Its function is as follows. Condenses two molecules of dimethylallyl diphosphate (DMAPP) to produce mainly an irregular monoterpene, chrysanthemyl diphosphate (CPP) and lower amounts of a branched monoterpene, lavandulyl diphosphate (LPP). CPP is a precursor of the pyrethrin insecticides. When incubated with isopentenyl diphosphate (IPP) and DMAPP, catalyzes three competing isoprenoid condensation reactions, a chain elongation to give geranyl diphosphate (GPP), a cyclopropanation to give CPP and a branching to give LPP. This chain is Monoterpene synthase FDS-5, chloroplastic (FDS-5), found in Artemisia spiciformis (Spiked big sagebrush).